We begin with the raw amino-acid sequence, 159 residues long: Ribosomal RNA large subunit methyltransferase H (159 aa).

S-adenosyl-L-methionine contacts are provided by residues leucine 76, glycine 108, and 127 to 132; that span reads FSKMTF.

Belongs to the RNA methyltransferase RlmH family. Homodimer.

The protein localises to the cytoplasm. The catalysed reaction is pseudouridine(1915) in 23S rRNA + S-adenosyl-L-methionine = N(3)-methylpseudouridine(1915) in 23S rRNA + S-adenosyl-L-homocysteine + H(+). Specifically methylates the pseudouridine at position 1915 (m3Psi1915) in 23S rRNA. In Clostridium botulinum (strain Eklund 17B / Type B), this protein is Ribosomal RNA large subunit methyltransferase H.